Consider the following 367-residue polypeptide: Cyclin-D3-2 (367 aa).

Residues 324–335 (STTASVSSSSSS) show a composition bias toward low complexity. The segment at 324 to 347 (STTASVSSSSSSPEPLLKRRRVQE) is disordered.

Belongs to the cyclin family. Cyclin D subfamily. As to quaternary structure, interacts with CDKA-1. Expressed in developing vegetative and floral primordia.

Promotes divisions in the guard cells (GCs) after the guard mother cells (GMC) symmetric division when in the presence of CDKA-1. The chain is Cyclin-D3-2 (CYCD3-2) from Arabidopsis thaliana (Mouse-ear cress).